The sequence spans 324 residues: Heat-inducible transcription repressor HrcA (324 aa).

Belongs to the HrcA family.

Its function is as follows. Negative regulator of class I heat shock genes (grpE-dnaK-dnaJ and groELS operons). Prevents heat-shock induction of these operons. This Synechococcus sp. (strain CC9902) protein is Heat-inducible transcription repressor HrcA.